Here is a 230-residue protein sequence, read N- to C-terminus: Uracil-DNA glycosylase (230 aa).

The active-site Proton acceptor is the Asp70.

The protein belongs to the uracil-DNA glycosylase (UDG) superfamily. UNG family.

Its subcellular location is the cytoplasm. The enzyme catalyses Hydrolyzes single-stranded DNA or mismatched double-stranded DNA and polynucleotides, releasing free uracil.. Its function is as follows. Excises uracil residues from the DNA which can arise as a result of misincorporation of dUMP residues by DNA polymerase or due to deamination of cytosine. The protein is Uracil-DNA glycosylase of Campylobacter concisus (strain 13826).